Reading from the N-terminus, the 549-residue chain is Glucose-6-phosphate isomerase (549 aa).

E355 functions as the Proton donor in the catalytic mechanism. Catalysis depends on residues H386 and K514.

Belongs to the GPI family.

The protein resides in the cytoplasm. The catalysed reaction is alpha-D-glucose 6-phosphate = beta-D-fructose 6-phosphate. It functions in the pathway carbohydrate biosynthesis; gluconeogenesis. It participates in carbohydrate degradation; glycolysis; D-glyceraldehyde 3-phosphate and glycerone phosphate from D-glucose: step 2/4. Catalyzes the reversible isomerization of glucose-6-phosphate to fructose-6-phosphate. The protein is Glucose-6-phosphate isomerase of Salmonella paratyphi B (strain ATCC BAA-1250 / SPB7).